The chain runs to 461 residues: V-type ATP synthase beta chain (461 aa).

It belongs to the ATPase alpha/beta chains family.

Produces ATP from ADP in the presence of a proton gradient across the membrane. The V-type beta chain is a regulatory subunit. The chain is V-type ATP synthase beta chain from Clostridium botulinum (strain Kyoto / Type A2).